Here is a 437-residue protein sequence, read N- to C-terminus: UDP-glucose 6-dehydrogenase (437 aa).

Residues Val11, Asp30, Lys35, Thr86, Thr122, and Glu155 each coordinate NAD(+). Substrate contacts are provided by residues 151–155, Lys209, Asn213, 254–258, and Gly262; these read EFLRE and FLHAG. Residue Cys265 is the Nucleophile of the active site. NAD(+) is bound at residue Lys268. Lys326 is a substrate binding site. Arg333 contacts NAD(+).

Belongs to the UDP-glucose/GDP-mannose dehydrogenase family.

The catalysed reaction is UDP-alpha-D-glucose + 2 NAD(+) + H2O = UDP-alpha-D-glucuronate + 2 NADH + 3 H(+). It functions in the pathway nucleotide-sugar biosynthesis; UDP-alpha-D-glucuronate biosynthesis; UDP-alpha-D-glucuronate from UDP-alpha-D-glucose: step 1/1. The protein operates within capsule biogenesis; capsule polysaccharide biosynthesis. This chain is UDP-glucose 6-dehydrogenase, found in Rhizobium meliloti (strain 1021) (Ensifer meliloti).